Reading from the N-terminus, the 428-residue chain is 3-phosphoshikimate 1-carboxyvinyltransferase (428 aa).

3-phosphoshikimate-binding residues include Lys23, Ser24, and Arg28. Lys23 lines the phosphoenolpyruvate pocket. Gly97 and Arg125 together coordinate phosphoenolpyruvate. Positions 170, 171, 172, 198, 314, 337, and 341 each coordinate 3-phosphoshikimate. Gln172 provides a ligand contact to phosphoenolpyruvate. Asp314 serves as the catalytic Proton acceptor. 3 residues coordinate phosphoenolpyruvate: Arg345, Arg387, and Lys412.

This sequence belongs to the EPSP synthase family. In terms of assembly, monomer.

It is found in the cytoplasm. It carries out the reaction 3-phosphoshikimate + phosphoenolpyruvate = 5-O-(1-carboxyvinyl)-3-phosphoshikimate + phosphate. The protein operates within metabolic intermediate biosynthesis; chorismate biosynthesis; chorismate from D-erythrose 4-phosphate and phosphoenolpyruvate: step 6/7. Functionally, catalyzes the transfer of the enolpyruvyl moiety of phosphoenolpyruvate (PEP) to the 5-hydroxyl of shikimate-3-phosphate (S3P) to produce enolpyruvyl shikimate-3-phosphate and inorganic phosphate. This is 3-phosphoshikimate 1-carboxyvinyltransferase from Erwinia tasmaniensis (strain DSM 17950 / CFBP 7177 / CIP 109463 / NCPPB 4357 / Et1/99).